The chain runs to 381 residues: Dual-specificity RNA methyltransferase RlmN (381 aa).

The active-site Proton acceptor is the glutamate 96. In terms of domain architecture, Radical SAM core spans 102 to 342 (TDDRGTLCVS…TRTTRGDDID (241 aa)). Cysteine 109 and cysteine 345 are disulfide-bonded. 3 residues coordinate [4Fe-4S] cluster: cysteine 116, cysteine 120, and cysteine 123. S-adenosyl-L-methionine is bound by residues 170–171 (GE), serine 202, 224–226 (SLH), and asparagine 302. Residue cysteine 345 is the S-methylcysteine intermediate of the active site.

Belongs to the radical SAM superfamily. RlmN family. Requires [4Fe-4S] cluster as cofactor.

It localises to the cytoplasm. The catalysed reaction is adenosine(2503) in 23S rRNA + 2 reduced [2Fe-2S]-[ferredoxin] + 2 S-adenosyl-L-methionine = 2-methyladenosine(2503) in 23S rRNA + 5'-deoxyadenosine + L-methionine + 2 oxidized [2Fe-2S]-[ferredoxin] + S-adenosyl-L-homocysteine. It catalyses the reaction adenosine(37) in tRNA + 2 reduced [2Fe-2S]-[ferredoxin] + 2 S-adenosyl-L-methionine = 2-methyladenosine(37) in tRNA + 5'-deoxyadenosine + L-methionine + 2 oxidized [2Fe-2S]-[ferredoxin] + S-adenosyl-L-homocysteine. Functionally, specifically methylates position 2 of adenine 2503 in 23S rRNA and position 2 of adenine 37 in tRNAs. m2A2503 modification seems to play a crucial role in the proofreading step occurring at the peptidyl transferase center and thus would serve to optimize ribosomal fidelity. This is Dual-specificity RNA methyltransferase RlmN from Pseudomonas putida (strain W619).